Here is a 403-residue protein sequence, read N- to C-terminus: MAKRALLIGINYPGTTEELQGCVNDVHRMHKCLVDRFGFAEEDITVLIDTDESYTQPTGKNIRQALSELIKPAKSGDVLFVHYSGHGTRVPPETGEEDDTGFDECIVPSDLNPIPDDDFRDLVEQVPEGCQITIVSDSCHSGGLIDEAKEQIGESTTTKPNRESKVSSFEFEFKNCLHSIFVKLLAFCGIGSSHVETREIVEVGEGDEVVRSRYLPLERFIELLKQQTGQDNIEIGKIRPTLFDVFGEDSSPKIKKFMKVILTKLRKTNDQSTLLGKIEESARGYIEETLNDEHYMKPAMQAQVKSDREIYGGRSSNGLFPDRGILLSGCQTDETSADVKKKGEAFGAFSNAIQMVLSETDHKDKITNKEMVLRAREILKKQMFIQRPGLYCNDRFVNAPFIC.

Catalysis depends on residues histidine 86 and cysteine 139. S-nitrosocysteine is present on cysteine 139.

Belongs to the peptidase C14B family. Proteolytically processed; by an autocatalytic mechanism. In terms of tissue distribution, expressed in roots, flowers and siliques.

This chain is Metacaspase-7 (AMC7), found in Arabidopsis thaliana (Mouse-ear cress).